The primary structure comprises 418 residues: Hydroxysteroid dehydrogenase-like protein 2 (418 aa).

NADP(+) is bound by residues 17–23, Lys-42, and Asp-74; that span reads GASRGIG. Lys-42 carries the post-translational modification N6-(2-hydroxyisobutyryl)lysine. At Lys-116 the chain carries N6-acetyllysine. Tyr-168 acts as the Proton acceptor in catalysis. Lys-172 serves as a coordination point for NADP(+). The tract at residues 287–310 is disordered; sequence STGAVPEFKEEKPQPQPKPRSGAV. One can recognise an SCP2 domain in the interval 306–415; the sequence is RSGAVEETFR…KLEKLMNQMN (110 aa). Lys-318 is subject to N6-succinyllysine.

The protein belongs to the short-chain dehydrogenases/reductases (SDR) family.

The protein resides in the peroxisome. The protein localises to the mitochondrion. Functionally, has apparently no steroid dehydrogenase activity. Controls bile acid (BA) and lipid metabolism in response to nutritional cues. This chain is Hydroxysteroid dehydrogenase-like protein 2 (HSDL2), found in Pongo abelii (Sumatran orangutan).